Consider the following 187-residue polypeptide: Peptidyl-tRNA hydrolase (187 aa).

Residue tyrosine 14 coordinates tRNA. Histidine 19 (proton acceptor) is an active-site residue. TRNA contacts are provided by tyrosine 60, asparagine 62, and asparagine 108.

This sequence belongs to the PTH family. As to quaternary structure, monomer.

The protein resides in the cytoplasm. It carries out the reaction an N-acyl-L-alpha-aminoacyl-tRNA + H2O = an N-acyl-L-amino acid + a tRNA + H(+). In terms of biological role, hydrolyzes ribosome-free peptidyl-tRNAs (with 1 or more amino acids incorporated), which drop off the ribosome during protein synthesis, or as a result of ribosome stalling. Its function is as follows. Catalyzes the release of premature peptidyl moieties from peptidyl-tRNA molecules trapped in stalled 50S ribosomal subunits, and thus maintains levels of free tRNAs and 50S ribosomes. This Mycoplasmopsis synoviae (strain 53) (Mycoplasma synoviae) protein is Peptidyl-tRNA hydrolase.